The sequence spans 833 residues: Leucine--tRNA ligase (833 aa).

The 'HIGH' region signature appears at 41–52; the sequence is PYPSGAGLHVGH. The short motif at 610–614 is the 'KMSKS' region element; sequence KMSKS. K613 provides a ligand contact to ATP.

The protein belongs to the class-I aminoacyl-tRNA synthetase family.

It localises to the cytoplasm. It carries out the reaction tRNA(Leu) + L-leucine + ATP = L-leucyl-tRNA(Leu) + AMP + diphosphate. The polypeptide is Leucine--tRNA ligase (Streptococcus pneumoniae (strain Hungary19A-6)).